A 359-amino-acid polypeptide reads, in one-letter code: E3 ubiquitin-protein ligase RNF146 (359 aa).

Residues 37–75 form an RING-type zinc finger; it reads CAICLQTCVHPVSLPCKHVFCYLCVKGASWLGKRCALCR. Residues Lys85 and Lys95 each participate in a glycyl lysine isopeptide (Lys-Gly) (interchain with G-Cter in ubiquitin) cross-link. Residues 92–168 enclose the WWE domain; that stretch reads EELKAASRGN…EHGRRRKIKR (77 aa). Residues Tyr108, Arg111, and Trp115 each coordinate a glycoprotein. A Glycyl lysine isopeptide (Lys-Gly) (interchain with G-Cter in ubiquitin) cross-link involves residue Lys131. The a glycoprotein site is built by Tyr145, Gln154, Arg164, and Lys176. Residue Lys176 forms a Glycyl lysine isopeptide (Lys-Gly) (interchain with G-Cter in ubiquitin) linkage. The segment at 254 to 359 is disordered; that stretch reads GDNTAERSHR…PDGQCTVTEV (106 aa). Acidic residues predominate over residues 284–298; that stretch reads SIEETESDASSDSED. Ser290 and Ser294 each carry phosphoserine. A compositionally biased stretch (polar residues) spans 306-323; sequence HSLTQQRLLVSNANQTVP.

Can form homooligomers. Interacts with PARsylated AXIN1, AXIN2, BLZF1, CASC3, H1-2, IPO7, LIG3, NCL, PARP1, XRCC1, XRCC5 and XRCC6. Interacts with DDB1, DHX15, IQGAP1, LRPPRC, PARP2, PRKDC, RUVBL2, TNKS1 and TNKS2. Binding often leads to interactor ubiquitination, in the presence of the appropriate E1 and E2 enzymes, and proteasomal degradation. Ubiquitinated; autoubiquitinated. Polyubiquitinated in the presence of UBE2D1, UBE2D2 and UBE2D3. Multimonoubiquitinated in the presence of UBE2E1. Not ubiquitinated in the presence of UBE2H, CDC34, UBE2L3, UBE2L6, nor UBE2C. In the absence of PAR, autoubiquitination occurs on Lys-85, Lys-95 and Lys-176 via 'Lys-11' and 'Lys-48' ubiquitin linkages. In the presence of PAR, Lys-131 and Lys-176 are ubiquitinated via 'Lys-6', 'Lys-33' and 'Lys-48' ubiquitin linkages. Autoubiquitination is enhanced upon PAR-binding. In terms of tissue distribution, ubiquitously expressed. Up-regulated in brains from patients with Alzheimer disease.

Its subcellular location is the cytoplasm. It localises to the cytosol. The protein localises to the nucleus. It carries out the reaction S-ubiquitinyl-[E2 ubiquitin-conjugating enzyme]-L-cysteine + [acceptor protein]-L-lysine = [E2 ubiquitin-conjugating enzyme]-L-cysteine + N(6)-ubiquitinyl-[acceptor protein]-L-lysine.. It participates in protein modification; protein ubiquitination. E3 ubiquitin-protein ligase that specifically binds poly-ADP-ribosylated (PARsylated) proteins and mediates their ubiquitination and subsequent degradation. May regulate many important biological processes, such as cell survival and DNA damage response. Acts as an activator of the Wnt signaling pathway by mediating the ubiquitination of PARsylated AXIN1 and AXIN2, 2 key components of the beta-catenin destruction complex. Acts in cooperation with tankyrase proteins (TNKS and TNKS2), which mediate PARsylation of target proteins AXIN1, AXIN2, BLZF1, CASC3, TNKS and TNKS2. Recognizes and binds tankyrase-dependent PARsylated proteins via its WWE domain and mediates their ubiquitination, leading to their degradation. Different ubiquitin linkage types have been observed: TNKS2 undergoes ubiquitination at 'Lys-48' and 'Lys-63', while AXIN1 is only ubiquitinated at 'Lys-48'. May regulate TNKS and TNKS2 subcellular location, preventing aggregation at a centrosomal location. Neuroprotective protein. Protects the brain against N-methyl-D-aspartate (NMDA) receptor-mediated glutamate excitotoxicity and ischemia, by interfering with PAR-induced cell death, called parthanatos. Prevents nuclear translocation of AIFM1 in a PAR-binding dependent manner. Does not affect PARP1 activation. Protects against cell death induced by DNA damaging agents, such as N-methyl-N-nitro-N-nitrosoguanidine (MNNG) and rescues cells from G1 arrest. Promotes cell survival after gamma-irradiation. Facilitates DNA repair. The polypeptide is E3 ubiquitin-protein ligase RNF146 (RNF146) (Homo sapiens (Human)).